Reading from the N-terminus, the 467-residue chain is Cysteine--tRNA ligase (467 aa).

Cysteine 28 lines the Zn(2+) pocket. Positions 30–40 (PTVYNYIHVGN) match the 'HIGH' region motif. Residues cysteine 212, histidine 237, and glutamate 241 each contribute to the Zn(2+) site. The short motif at 269-273 (KMSKS) is the 'KMSKS' region element. Lysine 272 serves as a coordination point for ATP.

It belongs to the class-I aminoacyl-tRNA synthetase family. In terms of assembly, monomer. The cofactor is Zn(2+).

Its subcellular location is the cytoplasm. The catalysed reaction is tRNA(Cys) + L-cysteine + ATP = L-cysteinyl-tRNA(Cys) + AMP + diphosphate. The chain is Cysteine--tRNA ligase from Oenococcus oeni (strain ATCC BAA-331 / PSU-1).